The primary structure comprises 491 residues: 3-octaprenyl-4-hydroxybenzoate carboxy-lyase (491 aa).

Position 172 (N172) interacts with Mn(2+). Prenylated FMN-binding positions include 175–177, 189–191, and 194–195; these read IYR, RWL, and RG. Residue E238 participates in Mn(2+) binding. D287 functions as the Proton donor in the catalytic mechanism.

Belongs to the UbiD family. In terms of assembly, homohexamer. Prenylated FMN is required as a cofactor. Requires Mn(2+) as cofactor.

It localises to the cell membrane. It catalyses the reaction a 4-hydroxy-3-(all-trans-polyprenyl)benzoate + H(+) = a 2-(all-trans-polyprenyl)phenol + CO2. It functions in the pathway cofactor biosynthesis; ubiquinone biosynthesis. Functionally, catalyzes the decarboxylation of 3-octaprenyl-4-hydroxy benzoate to 2-octaprenylphenol, an intermediate step in ubiquinone biosynthesis. This is 3-octaprenyl-4-hydroxybenzoate carboxy-lyase from Klebsiella pneumoniae subsp. pneumoniae (strain ATCC 700721 / MGH 78578).